A 443-amino-acid polypeptide reads, in one-letter code: Phosphoglucosamine mutase (443 aa).

Serine 101 acts as the Phosphoserine intermediate in catalysis. Serine 101, aspartate 239, aspartate 241, and aspartate 243 together coordinate Mg(2+). Serine 101 is modified (phosphoserine).

Belongs to the phosphohexose mutase family. Mg(2+) serves as cofactor. Post-translationally, activated by phosphorylation.

It catalyses the reaction alpha-D-glucosamine 1-phosphate = D-glucosamine 6-phosphate. In terms of biological role, catalyzes the conversion of glucosamine-6-phosphate to glucosamine-1-phosphate. This chain is Phosphoglucosamine mutase, found in Francisella philomiragia subsp. philomiragia (strain ATCC 25017 / CCUG 19701 / FSC 153 / O#319-036).